We begin with the raw amino-acid sequence, 245 residues long: Cysteine-rich secretory protein 3 (245 aa).

The signal sequence occupies residues 1 to 20 (MTLFPVLLFLVAGLLPSFPA). The SCP domain maps to 43 to 171 (VNKHNELRRA…VLKYYYVCQY (129 aa)). Intrachain disulfides connect cysteine 191/cysteine 198, cysteine 194/cysteine 203, cysteine 207/cysteine 240, cysteine 216/cysteine 234, and cysteine 225/cysteine 238. One can recognise a ShKT domain in the interval 207–240 (CKYEDLYSNCKSLKLTLTCKHQLVRDSCKASCNC). Asparagine 239 carries N-linked (GlcNAc...) asparagine glycosylation.

The protein belongs to the CRISP family. Interacts with A1BG. Salivary gland, pancreas and prostate &gt; epididymis, ovary, thymus and colon.

The protein localises to the secreted. This Homo sapiens (Human) protein is Cysteine-rich secretory protein 3 (CRISP3).